The sequence spans 129 residues: UPF0102 protein Cag_1992 (129 aa).

The protein belongs to the UPF0102 family.

This chain is UPF0102 protein Cag_1992, found in Chlorobium chlorochromatii (strain CaD3).